Consider the following 137-residue polypeptide: Urease subunit beta (137 aa).

The tract at residues 113-137 (NGHPNAGVKNDEGKQNANKESGDNR) is disordered.

It belongs to the urease beta subunit family. Heterotrimer of UreA (gamma), UreB (beta) and UreC (alpha) subunits. Three heterotrimers associate to form the active enzyme.

The protein resides in the cytoplasm. The enzyme catalyses urea + 2 H2O + H(+) = hydrogencarbonate + 2 NH4(+). The protein operates within nitrogen metabolism; urea degradation; CO(2) and NH(3) from urea (urease route): step 1/1. The chain is Urease subunit beta from Staphylococcus carnosus (strain TM300).